We begin with the raw amino-acid sequence, 161 residues long: MAKKKSKDKAGSNTIAMNKQARHEYFIEDEIEAGVELQGWEVKSLRSGKVNIAESYVYVRDGEIFISGMNITPLQAASTHVVANPTRVRKLLMSRKEIDNLIGRVNREGMTLVATTMYWVRSWAKIKVGVAKGKKLHDKRTDSKEKDWNRDKARIMKSSLR.

The interval 137–161 (HDKRTDSKEKDWNRDKARIMKSSLR) is disordered. The span at 139–154 (KRTDSKEKDWNRDKAR) shows a compositional bias: basic and acidic residues.

Belongs to the SmpB family.

The protein localises to the cytoplasm. Required for rescue of stalled ribosomes mediated by trans-translation. Binds to transfer-messenger RNA (tmRNA), required for stable association of tmRNA with ribosomes. tmRNA and SmpB together mimic tRNA shape, replacing the anticodon stem-loop with SmpB. tmRNA is encoded by the ssrA gene; the 2 termini fold to resemble tRNA(Ala) and it encodes a 'tag peptide', a short internal open reading frame. During trans-translation Ala-aminoacylated tmRNA acts like a tRNA, entering the A-site of stalled ribosomes, displacing the stalled mRNA. The ribosome then switches to translate the ORF on the tmRNA; the nascent peptide is terminated with the 'tag peptide' encoded by the tmRNA and targeted for degradation. The ribosome is freed to recommence translation, which seems to be the essential function of trans-translation. The sequence is that of SsrA-binding protein from Aliivibrio salmonicida (strain LFI1238) (Vibrio salmonicida (strain LFI1238)).